Reading from the N-terminus, the 158-residue chain is MYILTDKVATELKKPFGKVYKELNSIEGKVISIGDVTTKHLLSNGIVPDLSILDFKTKRNVPVEIPHKFKTVFEVYNPPGYISDEAIERIKYLSTIDDRDMALIVKGEEDLLTLPVIKYFPEDTSVIYGQPDEGMVVLKITKELKQKIEKLLKDMEER.

Positions 35, 36, 54, 56, 109, and 132 each coordinate GTP.

This sequence belongs to the GTP-dependent DPCK family.

The enzyme catalyses 3'-dephospho-CoA + GTP = GDP + CoA + H(+). The protein operates within cofactor biosynthesis; coenzyme A biosynthesis. In terms of biological role, catalyzes the GTP-dependent phosphorylation of the 3'-hydroxyl group of dephosphocoenzyme A to form coenzyme A (CoA). The polypeptide is GTP-dependent dephospho-CoA kinase (Methanococcus vannielii (strain ATCC 35089 / DSM 1224 / JCM 13029 / OCM 148 / SB)).